We begin with the raw amino-acid sequence, 384 residues long: Spermidine/putrescine import ATP-binding protein PotA (384 aa).

The 233-residue stretch at 6-238 (IAFKNVSKVF…PINHFVATFI (233 aa)) folds into the ABC transporter domain. Residue 40 to 47 (GASGSGKS) coordinates ATP.

Belongs to the ABC transporter superfamily. Spermidine/putrescine importer (TC 3.A.1.11.1) family. In terms of assembly, the complex is composed of two ATP-binding proteins (PotA), two transmembrane proteins (PotB and PotC) and a solute-binding protein (PotD).

It localises to the cell membrane. The catalysed reaction is ATP + H2O + polyamine-[polyamine-binding protein]Side 1 = ADP + phosphate + polyamineSide 2 + [polyamine-binding protein]Side 1.. Part of the ABC transporter complex PotABCD involved in spermidine/putrescine import. Responsible for energy coupling to the transport system. The sequence is that of Spermidine/putrescine import ATP-binding protein PotA from Streptococcus agalactiae serotype Ia (strain ATCC 27591 / A909 / CDC SS700).